The following is a 1330-amino-acid chain: ESX-3 secretion system protein EccC3 (1330 aa).

Helical transmembrane passes span 43 to 63 (LPYLIGILIVGMIVALVATGM) and 65 to 85 (VISPQTLFFPFVLLLAATALY). 3 FtsK domains span residues 456–662 (GEPL…SVSR), 811–1000 (RDPL…RDSN), and 1090–1280 (LAPV…ADSG). ATP-binding positions include 479-486 (GMTGSGKS), 829-836 (GGPKSGKS), and 1107-1114 (GDARSGKT).

In terms of assembly, part of the ESX-3 / type VII secretion system (T7SS), which is composed of cytosolic and membrane components. The ESX-3 membrane complex is composed of EccB3, EccC3, EccD3 and EccE3.

The protein resides in the cell inner membrane. Functionally, part of the ESX-3 specialized secretion system, which is important for iron and zinc uptake or homeostasis. This is ESX-3 secretion system protein EccC3 from Mycobacterium tuberculosis (strain ATCC 25618 / H37Rv).